Here is a 115-residue protein sequence, read N- to C-terminus: MTRVKRGNVARKRRKQVLNLASGFRGSSSRLFRTAQQQTMKALSYSYRDRQQKKREFCGLWVTRLNAAARLYGLNYTNFRHNLKKAGIQLNRKVLSQVALRDKQAFEQLILLVKD.

The protein belongs to the bacterial ribosomal protein bL20 family.

It is found in the plastid. Its subcellular location is the chloroplast. In terms of biological role, binds directly to 23S ribosomal RNA and is necessary for the in vitro assembly process of the 50S ribosomal subunit. It is not involved in the protein synthesizing functions of that subunit. The polypeptide is Large ribosomal subunit protein bL20c (rpl20) (Chlorella vulgaris (Green alga)).